We begin with the raw amino-acid sequence, 59 residues long: Dybowskin-1CDYa (59 aa).

The first 22 residues, 1 to 22 (MFTLKKSLLLLFFLGTINFSLC), serve as a signal peptide directing secretion. Residues 23 to 44 (EEERNAEEERRDYPEERDVEVE) constitute a propeptide that is removed on maturation.

Belongs to the frog skin active peptide (FSAP) family. Brevinin subfamily. As to expression, expressed by the skin glands.

The protein localises to the secreted. In terms of biological role, antimicrobial peptide. Has activity against the Gram-positive bacterium S.aureus (MIC=6 uM) and the Gram-negative bacterium E.coli (MIC=3 uM). Lacks hemolytic activity against human erythrocytes. This is Dybowskin-1CDYa from Rana dybowskii (Dybovsky's frog).